A 77-amino-acid polypeptide reads, in one-letter code: Sec-independent protein translocase protein TatA (77 aa).

A helical membrane pass occupies residues 1 to 21 (MGSFSIWHWLIVLVIVMLVFG). Residues 50–77 (ADASTQQKISGGQTLEGEAREKVEKTHS) are disordered. A compositionally biased stretch (polar residues) spans 53–62 (STQQKISGGQ). Residues 66–77 (GEAREKVEKTHS) show a composition bias toward basic and acidic residues.

It belongs to the TatA/E family. The Tat system comprises two distinct complexes: a TatABC complex, containing multiple copies of TatA, TatB and TatC subunits, and a separate TatA complex, containing only TatA subunits. Substrates initially bind to the TatABC complex, which probably triggers association of the separate TatA complex to form the active translocon.

Its subcellular location is the cell inner membrane. Its function is as follows. Part of the twin-arginine translocation (Tat) system that transports large folded proteins containing a characteristic twin-arginine motif in their signal peptide across membranes. TatA could form the protein-conducting channel of the Tat system. This is Sec-independent protein translocase protein TatA from Azoarcus sp. (strain BH72).